The chain runs to 344 residues: Glucan endo-1,3-beta-glucosidase (344 aa).

The N-terminal stretch at Met1 to Ala27 is a signal peptide. Glu123 functions as the Proton donor in the catalytic mechanism. Glu268 functions as the Nucleophile in the catalytic mechanism.

This sequence belongs to the glycosyl hydrolase 17 family.

It catalyses the reaction Hydrolysis of (1-&gt;3)-beta-D-glucosidic linkages in (1-&gt;3)-beta-D-glucans.. In terms of biological role, implicated in the defense of plants against pathogens. This Vitis vinifera (Grape) protein is Glucan endo-1,3-beta-glucosidase.